A 334-amino-acid polypeptide reads, in one-letter code: Holliday junction branch migration complex subunit RuvB (334 aa).

The interval 4 to 186 (ADRLIAPISN…FGIVQRLEYY (183 aa)) is large ATPase domain (RuvB-L). Residues isoleucine 25, arginine 26, glycine 67, lysine 70, threonine 71, threonine 72, 133 to 135 (EDY), arginine 176, tyrosine 186, and arginine 223 each bind ATP. Threonine 71 provides a ligand contact to Mg(2+). The small ATPAse domain (RuvB-S) stretch occupies residues 187 to 257 (KVADLQHIVQ…TADRALNMLD (71 aa)). The tract at residues 260 to 334 (HQGFDYMDRK…RAYLHFGIEK (75 aa)) is head domain (RuvB-H). The DNA site is built by arginine 315 and arginine 320.

This sequence belongs to the RuvB family. As to quaternary structure, homohexamer. Forms an RuvA(8)-RuvB(12)-Holliday junction (HJ) complex. HJ DNA is sandwiched between 2 RuvA tetramers; dsDNA enters through RuvA and exits via RuvB. An RuvB hexamer assembles on each DNA strand where it exits the tetramer. Each RuvB hexamer is contacted by two RuvA subunits (via domain III) on 2 adjacent RuvB subunits; this complex drives branch migration. In the full resolvosome a probable DNA-RuvA(4)-RuvB(12)-RuvC(2) complex forms which resolves the HJ.

The protein resides in the cytoplasm. It catalyses the reaction ATP + H2O = ADP + phosphate + H(+). Its function is as follows. The RuvA-RuvB-RuvC complex processes Holliday junction (HJ) DNA during genetic recombination and DNA repair, while the RuvA-RuvB complex plays an important role in the rescue of blocked DNA replication forks via replication fork reversal (RFR). RuvA specifically binds to HJ cruciform DNA, conferring on it an open structure. The RuvB hexamer acts as an ATP-dependent pump, pulling dsDNA into and through the RuvAB complex. RuvB forms 2 homohexamers on either side of HJ DNA bound by 1 or 2 RuvA tetramers; 4 subunits per hexamer contact DNA at a time. Coordinated motions by a converter formed by DNA-disengaged RuvB subunits stimulates ATP hydrolysis and nucleotide exchange. Immobilization of the converter enables RuvB to convert the ATP-contained energy into a lever motion, pulling 2 nucleotides of DNA out of the RuvA tetramer per ATP hydrolyzed, thus driving DNA branch migration. The RuvB motors rotate together with the DNA substrate, which together with the progressing nucleotide cycle form the mechanistic basis for DNA recombination by continuous HJ branch migration. Branch migration allows RuvC to scan DNA until it finds its consensus sequence, where it cleaves and resolves cruciform DNA. This chain is Holliday junction branch migration complex subunit RuvB, found in Vibrio cholerae serotype O1 (strain ATCC 39541 / Classical Ogawa 395 / O395).